We begin with the raw amino-acid sequence, 604 residues long: FAD-linked oxidoreductase easE (604 aa).

An N-terminal signal peptide occupies residues 1–25 (MQFLLWSTGLVALLSWLIYTQETQS). Residues Asn47, Asn70, Asn106, and Asn196 are each glycosylated (N-linked (GlcNAc...) asparagine). Residues 125-308 (QGRIPLFTVG…TRATMRVFPD (184 aa)) enclose the FAD-binding PCMH-type domain.

This sequence belongs to the oxygen-dependent FAD-linked oxidoreductase family. Requires FAD as cofactor.

It functions in the pathway alkaloid biosynthesis; ergot alkaloid biosynthesis. In terms of biological role, FAD-linked oxidoreductase; part of the gene cluster that mediates the biosynthesis of fungal ergot alkaloid. DmaW catalyzes the first step of ergot alkaloid biosynthesis by condensing dimethylallyl diphosphate (DMAP) and tryptophan to form 4-dimethylallyl-L-tryptophan. The second step is catalyzed by the methyltransferase easF that methylates 4-dimethylallyl-L-tryptophan in the presence of S-adenosyl-L-methionine, resulting in the formation of 4-dimethylallyl-L-abrine. The catalase easC and the FAD-dependent oxidoreductase easE then transform 4-dimethylallyl-L-abrine to chanoclavine-I which is further oxidized by easD in the presence of NAD(+), resulting in the formation of chanoclavine-I aldehyde. Chanoclavine-I aldehyde is the precursor of ergoamides and ergopeptines in Clavicipitaceae, and clavine-type alcaloids such as fumiclavine in Trichocomaceae. However, the metabolites downstream of chanoclavine-I aldehyde in Arthrodermataceae have not been identified yet. This Trichophyton verrucosum (strain HKI 0517) protein is FAD-linked oxidoreductase easE.